We begin with the raw amino-acid sequence, 434 residues long: Histidinol dehydrogenase (434 aa).

NAD(+) is bound by residues Y129, Q191, and N214. S240, Q262, and H265 together coordinate substrate. 2 residues coordinate Zn(2+): Q262 and H265. Residues E329 and H330 each act as proton acceptor in the active site. 4 residues coordinate substrate: H330, D363, E417, and H422. D363 contributes to the Zn(2+) binding site. H422 contributes to the Zn(2+) binding site.

The protein belongs to the histidinol dehydrogenase family. Zn(2+) is required as a cofactor.

The enzyme catalyses L-histidinol + 2 NAD(+) + H2O = L-histidine + 2 NADH + 3 H(+). It participates in amino-acid biosynthesis; L-histidine biosynthesis; L-histidine from 5-phospho-alpha-D-ribose 1-diphosphate: step 9/9. Catalyzes the sequential NAD-dependent oxidations of L-histidinol to L-histidinaldehyde and then to L-histidine. The sequence is that of Histidinol dehydrogenase from Colwellia psychrerythraea (strain 34H / ATCC BAA-681) (Vibrio psychroerythus).